A 289-amino-acid polypeptide reads, in one-letter code: 4-diphosphocytidyl-2-C-methyl-D-erythritol kinase (289 aa).

Lys10 is an active-site residue. Position 94 to 104 (94 to 104 (PVAAGLAGGSS)) interacts with ATP. Asp136 is an active-site residue.

It belongs to the GHMP kinase family. IspE subfamily.

It carries out the reaction 4-CDP-2-C-methyl-D-erythritol + ATP = 4-CDP-2-C-methyl-D-erythritol 2-phosphate + ADP + H(+). The protein operates within isoprenoid biosynthesis; isopentenyl diphosphate biosynthesis via DXP pathway; isopentenyl diphosphate from 1-deoxy-D-xylulose 5-phosphate: step 3/6. Its function is as follows. Catalyzes the phosphorylation of the position 2 hydroxy group of 4-diphosphocytidyl-2C-methyl-D-erythritol. The sequence is that of 4-diphosphocytidyl-2-C-methyl-D-erythritol kinase from Bacillus cytotoxicus (strain DSM 22905 / CIP 110041 / 391-98 / NVH 391-98).